Here is a 452-residue protein sequence, read N- to C-terminus: Probable phosphoglucosamine mutase (452 aa).

Catalysis depends on serine 96, which acts as the Phosphoserine intermediate. Mg(2+) is bound by residues serine 96, aspartate 235, aspartate 237, and aspartate 239. Serine 96 is subject to Phosphoserine.

Belongs to the phosphohexose mutase family. Requires Mg(2+) as cofactor. Post-translationally, activated by phosphorylation.

The enzyme catalyses alpha-D-glucosamine 1-phosphate = D-glucosamine 6-phosphate. Its function is as follows. Catalyzes the conversion of glucosamine-6-phosphate to glucosamine-1-phosphate. The sequence is that of Probable phosphoglucosamine mutase from Methanopyrus kandleri (strain AV19 / DSM 6324 / JCM 9639 / NBRC 100938).